A 353-amino-acid polypeptide reads, in one-letter code: Quinolinate synthase (353 aa).

Residues H47 and S68 each coordinate iminosuccinate. [4Fe-4S] cluster is bound at residue C113. Residues 139-141 and S156 each bind iminosuccinate; that span reads YAN. Residue C200 participates in [4Fe-4S] cluster binding. Iminosuccinate-binding positions include 226-228 and T243; that span reads HPE. Residue C297 coordinates [4Fe-4S] cluster.

The protein belongs to the quinolinate synthase family. Type 1 subfamily. Requires [4Fe-4S] cluster as cofactor.

It localises to the cytoplasm. The enzyme catalyses iminosuccinate + dihydroxyacetone phosphate = quinolinate + phosphate + 2 H2O + H(+). It participates in cofactor biosynthesis; NAD(+) biosynthesis; quinolinate from iminoaspartate: step 1/1. Its function is as follows. Catalyzes the condensation of iminoaspartate with dihydroxyacetone phosphate to form quinolinate. This is Quinolinate synthase from Vibrio vulnificus (strain YJ016).